Reading from the N-terminus, the 717-residue chain is Coupling protein TraD (717 aa).

Residues 1 to 27 (MSFNAKDMTQGGQIASMRIRMFSQIAN) lie on the Cytoplasmic side of the membrane. The helical transmembrane segment at 28–47 (IMLYCLFIFFWILVGLVLWI) threads the bilayer. Over 48-104 (KISWQTFVNGCIYWWCTTLEGMRDLIKSQPVYEIQYYGKTFRMNAAQVLHDKYMIWC) the chain is Periplasmic. A helical membrane pass occupies residues 105–130 (SEQLWSAFVLAAVVALVICLITFFVV). The Cytoplasmic portion of the chain corresponds to 131–717 (SWILGRQGKQ…GEDVEPGDDF (587 aa)). ATP is bound at residue 192–199 (GTVGAGKS). 2 disordered regions span residues 614-639 (EDVT…DSGV) and 650-669 (LKMK…ISES).

It belongs to the TrwB coupling protein family. Interacts with relaxosome component TraM. May form a hexamer in the membrane.

It is found in the cell inner membrane. In terms of biological role, conjugative DNA transfer (CDT) is the unidirectional transfer of ssDNA plasmid from a donor to a recipient cell. It is the central mechanism by which antibiotic resistance and virulence factors are propagated in bacterial populations. Couples the transferosome to a type IV secretion system. Probably forms a pore through which single-stranded plasmid DNA is transferred to the secretion system. The last 37 residues are important for determining plasmid specificity and transfer efficiency, with additional specificity conferred by the TraD-TraM pair. In Escherichia coli (strain K12), this protein is Coupling protein TraD (traD).